Reading from the N-terminus, the 595-residue chain is Leiomodin-1 (595 aa).

2 disordered regions span residues 1 to 322 (MSKV…KVKN) and 467 to 568 (DKQR…QEKN). S12 is subject to Phosphoserine. The segment covering 27–40 (EEMEELEKELDVVD) has biased composition (acidic residues). 8 stretches are compositionally biased toward basic and acidic residues: residues 72 to 105 (CEKE…EDKG), 117 to 127 (QDSDVGKEPKK), 134 to 193 (FSRD…EKTG), 201 to 224 (SRDK…KLTA), 232 to 251 (RQED…KPEV), 259 to 289 (RDSR…REKQ), 467 to 476 (DKQRQKRLQE), and 484 to 493 (SGEKKDRLEV). Residue S85 is modified to Phosphoserine. S135 bears the Phosphoserine mark. Repeat copies occupy residues 165 to 180 (AAVD…REER), 181 to 196 (AAAT…GSVR), 197 to 212 (NAGL…EEVK), 213 to 227 (EPSK…AENR), 228 to 243 (STVG…ESRE), 244 to 257 (DRDK…IGCG), 258 to 273 (SRDS…KEET), and 274 to 288 (QPDK…TREK). The interval 165-288 (AAVDRKEAGK…VREEGKTREK (124 aa)) is 8 X approximate tandem repeats. 2 stretches are compositionally biased toward pro residues: residues 503-513 (SPKPSPQPSPK) and 527-538 (AAPPPPPPPLAP). A 5 X 4 AA approximate tandem repeats region spans residues 503–522 (SPKPSPQPSPKSAPKNSPKK). The residue at position 550 (S550) is a Phosphoserine. The region spanning 569–588 (SRDQLLAAIRSSNLKQLKKV) is the WH2 domain.

Detected in smooth muscle, in stomach and uterus, blood vessel wall, and in slow fibers in extraocular muscle, urinary bladder and sternothyroid muscle (at protein level).

The protein resides in the cytoplasm. The protein localises to the myofibril. It localises to the sarcomere. Its subcellular location is the cytoskeleton. Its function is as follows. Required for proper contractility of visceral smooth muscle cells. Mediates nucleation of actin filaments. This chain is Leiomodin-1, found in Rattus norvegicus (Rat).